Reading from the N-terminus, the 75-residue chain is Small ribosomal subunit protein bS18 (75 aa).

The protein belongs to the bacterial ribosomal protein bS18 family. As to quaternary structure, part of the 30S ribosomal subunit. Forms a tight heterodimer with protein bS6.

Functionally, binds as a heterodimer with protein bS6 to the central domain of the 16S rRNA, where it helps stabilize the platform of the 30S subunit. This is Small ribosomal subunit protein bS18 from Hydrogenovibrio crunogenus (strain DSM 25203 / XCL-2) (Thiomicrospira crunogena).